Here is a 121-residue protein sequence, read N- to C-terminus: Cell division protein FtsB (121 aa).

Residues 1 to 6 are Cytoplasmic-facing; the sequence is MRNWRW. The helical transmembrane segment at 7-24 threads the bilayer; the sequence is LLLVLAVLLAWLQYRFWF. The Periplasmic segment spans residues 25-121; that stretch reads GPGNSGEVMM…PEPIDPVDHP (97 aa). A coiled-coil region spans residues 31 to 66; the sequence is EVMMLEAQVAHQTQDNEGLRQRNQALAAEVKDLKDG. Residues 92 to 121 form a disordered region; it reads EDAPLPAPASPEAPAPPQQAPEPIDPVDHP. Positions 96–115 are enriched in pro residues; it reads LPAPASPEAPAPPQQAPEPI.

It belongs to the FtsB family. As to quaternary structure, part of a complex composed of FtsB, FtsL and FtsQ.

Its subcellular location is the cell inner membrane. Essential cell division protein. May link together the upstream cell division proteins, which are predominantly cytoplasmic, with the downstream cell division proteins, which are predominantly periplasmic. The polypeptide is Cell division protein FtsB (Xanthomonas euvesicatoria pv. vesicatoria (strain 85-10) (Xanthomonas campestris pv. vesicatoria)).